Consider the following 580-residue polypeptide: Glutamine--tRNA ligase (580 aa).

Residues proline 41–histidine 51 carry the 'HIGH' region motif. ATP contacts are provided by residues glutamate 42 to asparagine 44 and histidine 48 to alanine 54. Residues aspartate 74 and tyrosine 218 each contribute to the L-glutamine site. Residues threonine 237, arginine 285–leucine 286, and methionine 293–lysine 295 each bind ATP. The 'KMSKS' region motif lies at valine 292–arginine 296.

This sequence belongs to the class-I aminoacyl-tRNA synthetase family. In terms of assembly, monomer.

The protein resides in the cytoplasm. The catalysed reaction is tRNA(Gln) + L-glutamine + ATP = L-glutaminyl-tRNA(Gln) + AMP + diphosphate. The polypeptide is Glutamine--tRNA ligase (Xylella fastidiosa (strain Temecula1 / ATCC 700964)).